The primary structure comprises 261 residues: UPF0177 protein YvdC (261 aa).

6 consecutive transmembrane segments (helical) span residues 15-35 (WVIVIILALLFSALSVSIFHL), 43-63 (VLSIVGLIFAYHKSVWLVLFI), 84-104 (LDTVIFFIIFLLTIISSYLIA), 123-143 (IIIGFALLFLVSILTGIFAQI), 197-217 (YFAFLTALLLFAYMHGPTDLY), and 239-259 (FYLNMSVHLLWNLFGLVIALV).

The protein belongs to the UPF0177 family.

It is found in the cell membrane. The polypeptide is UPF0177 protein YvdC (yvdC) (Lactococcus lactis subsp. lactis (strain IL1403) (Streptococcus lactis)).